A 327-amino-acid chain; its full sequence is Protein UL95 homolog (327 aa).

The protein belongs to the herpesviridae UL95 family. As to quaternary structure, interacts with ORF24; this interaction may serve as a core scaffold for the assembly of the viral transcription initiation complex. Interacts with ORF66. Interacts with ORF18. Interacts with ORF23. Interacts with ORF31. Interacts with host EPAS1; this interaction stabilizes host EPAS1, ensuring its transcriptional activity.

Its subcellular location is the host nucleus. In terms of biological role, participates in the expression of late viral mRNAs in part by interacting with ORF24. Expressed before viral DNA replication, assembles at the viral pre-replication complexes (pre-RCs) and thus serves as a hub for recruiting a viral transcription complex to ORF24 to promote late viral gene expression. Also plays a regulatory role in the viral life cycle by regulating host transcriptional regulators HIF1A and EPAS1. The chain is Protein UL95 homolog (ORF34) from Homo sapiens (Human).